A 282-amino-acid chain; its full sequence is Large ribosomal subunit protein uL2 (282 aa).

Disordered stretches follow at residues glutamate 31 to glycine 56 and serine 226 to methionine 282. Positions leucine 35–arginine 44 are enriched in polar residues. The span at threonine 257–lysine 266 shows a compositional bias: basic residues.

It belongs to the universal ribosomal protein uL2 family. In terms of assembly, part of the 50S ribosomal subunit. Forms a bridge to the 30S subunit in the 70S ribosome.

Its function is as follows. One of the primary rRNA binding proteins. Required for association of the 30S and 50S subunits to form the 70S ribosome, for tRNA binding and peptide bond formation. It has been suggested to have peptidyltransferase activity; this is somewhat controversial. Makes several contacts with the 16S rRNA in the 70S ribosome. This chain is Large ribosomal subunit protein uL2, found in Levilactobacillus brevis (strain ATCC 367 / BCRC 12310 / CIP 105137 / JCM 1170 / LMG 11437 / NCIMB 947 / NCTC 947) (Lactobacillus brevis).